We begin with the raw amino-acid sequence, 154 residues long: MKTIEGNLQLKGNEKIAIIASRFNHLITDRLVEGAKDAFLRNGGKEENIELILVPGAFELPFGLKRAIKTGKYDGIVCVGAVIRGATPHFDYVAAEATKGIANTTLQADIPVTFGLLTTDTIEQAIERAGTKAGNKGFEAMLGLIEMINLYKEL.

5-amino-6-(D-ribitylamino)uracil is bound by residues F23, 57–59 (AFE), and 81–83 (AVI). 86 to 87 (AT) contacts (2S)-2-hydroxy-3-oxobutyl phosphate. H89 serves as the catalytic Proton donor. F114 contacts 5-amino-6-(D-ribitylamino)uracil. R128 is a binding site for (2S)-2-hydroxy-3-oxobutyl phosphate.

Belongs to the DMRL synthase family.

It carries out the reaction (2S)-2-hydroxy-3-oxobutyl phosphate + 5-amino-6-(D-ribitylamino)uracil = 6,7-dimethyl-8-(1-D-ribityl)lumazine + phosphate + 2 H2O + H(+). It participates in cofactor biosynthesis; riboflavin biosynthesis; riboflavin from 2-hydroxy-3-oxobutyl phosphate and 5-amino-6-(D-ribitylamino)uracil: step 1/2. Functionally, catalyzes the formation of 6,7-dimethyl-8-ribityllumazine by condensation of 5-amino-6-(D-ribitylamino)uracil with 3,4-dihydroxy-2-butanone 4-phosphate. This is the penultimate step in the biosynthesis of riboflavin. In Nautilia profundicola (strain ATCC BAA-1463 / DSM 18972 / AmH), this protein is 6,7-dimethyl-8-ribityllumazine synthase.